Reading from the N-terminus, the 210-residue chain is Chaperone protein TorD (210 aa).

Belongs to the TorD/DmsD family. TorD subfamily.

Its subcellular location is the cytoplasm. Its function is as follows. Involved in the biogenesis of TorA. Acts on TorA before the insertion of the molybdenum cofactor and, as a result, probably favors a conformation of the apoenzyme that is competent for acquiring the cofactor. This Salmonella schwarzengrund (strain CVM19633) protein is Chaperone protein TorD.